The primary structure comprises 96 residues: MNINEDSLQKIAELSRLKIRSEEKEATLQDFNKILEYVDQIKGLDVSSIKDDEIYLHHENAIRPDLAGKHLSREEIESFAPSFQNGYFVVPKVIET.

This sequence belongs to the GatC family. Heterotrimer of A, B and C subunits.

The enzyme catalyses L-glutamyl-tRNA(Gln) + L-glutamine + ATP + H2O = L-glutaminyl-tRNA(Gln) + L-glutamate + ADP + phosphate + H(+). It catalyses the reaction L-aspartyl-tRNA(Asn) + L-glutamine + ATP + H2O = L-asparaginyl-tRNA(Asn) + L-glutamate + ADP + phosphate + 2 H(+). Functionally, allows the formation of correctly charged Asn-tRNA(Asn) or Gln-tRNA(Gln) through the transamidation of misacylated Asp-tRNA(Asn) or Glu-tRNA(Gln) in organisms which lack either or both of asparaginyl-tRNA or glutaminyl-tRNA synthetases. The reaction takes place in the presence of glutamine and ATP through an activated phospho-Asp-tRNA(Asn) or phospho-Glu-tRNA(Gln). The sequence is that of Aspartyl/glutamyl-tRNA(Asn/Gln) amidotransferase subunit C from Leptospira interrogans serogroup Icterohaemorrhagiae serovar copenhageni (strain Fiocruz L1-130).